Consider the following 858-residue polypeptide: Ubiquitin carboxyl-terminal hydrolase 5 (858 aa).

An N-acetylalanine modification is found at Ala2. The segment at 74–96 is disordered; that stretch reads RRTRRPKEEDPTTGTGDPPRKKP. Lys113 is covalently cross-linked (Glycyl lysine isopeptide (Lys-Gly) (interchain with G-Cter in SUMO)). Ser149 and Ser156 each carry phosphoserine. The UBP-type; degenerate zinc-finger motif lies at 175 to 283; it reads QVSKHAFSLK…EHLSHFGIDM (109 aa). Cysteines 195 and 816 form a disulfide. The Zn(2+) site is built by Cys199 and Cys202. Trp209 is a binding site for substrate. Cys219 is a binding site for Zn(2+). 221 to 224 provides a ligand contact to substrate; it reads RRYF. His232 lines the Zn(2+) pocket. Substrate-binding residues include Tyr259, Tyr261, and Asp264. Thr292 carries the phosphothreonine modification. Positions 326–856 constitute a USP domain; it reads TGIRNLGNSC…LGYIYFYQRV (531 aa). Catalysis depends on Cys335, which acts as the Nucleophile. At Thr623 the chain carries Phosphothreonine. UBA domains are found at residues 654 to 695 and 722 to 762; these read MLDE…VMSH and PPPE…IFSH. Residues Ser779, Ser783, and Ser785 each carry the phosphoserine modification. His818 acts as the Proton acceptor in catalysis.

Belongs to the peptidase C19 family. Homodimer. Interacts with TRIML1. In terms of processing, ubiquitinated by SMURF1; leading to proteasomal degradation. SUMOylated at Lys-113; SUMOylation affects the interaction with Cav3.2 channels.

The protein resides in the cytoplasm. It is found in the stress granule. Its subcellular location is the nucleus. It carries out the reaction Thiol-dependent hydrolysis of ester, thioester, amide, peptide and isopeptide bonds formed by the C-terminal Gly of ubiquitin (a 76-residue protein attached to proteins as an intracellular targeting signal).. Functionally, deubiquitinating enzyme that participates in a wide range of cellular processes by specifically cleaving isopeptide bonds between ubiquitin and substrate proteins or ubiquitin itself. Affects thereby important cellular signaling pathways such as NF-kappa-B, Wnt/beta-catenin, and cytokine production by regulating ubiquitin-dependent protein degradation. Participates in the activation of the Wnt signaling pathway by promoting FOXM1 deubiquitination and stabilization that induces the recruitment of beta-catenin to Wnt target gene promoter. Regulates the assembly and disassembly of heat-induced stress granules by mediating the hydrolysis of unanchored ubiquitin chains. Promotes lipopolysaccharide-induced apoptosis and inflammatory response by stabilizing the TXNIP protein. Affects T-cell biology by stabilizing the inhibitory receptor on T-cells PDC1. Acts as a negative regulator of autophagy by regulating ULK1 at both protein and mRNA levels. Acts also as a negative regulator of type I interferon production by simultaneously removing both 'Lys-48'-linked unanchored and 'Lys-63'-linked anchored polyubiquitin chains on the transcription factor IRF3. Modulates the stability of DNA mismatch repair protein MLH1 and counteracts the effect of the ubiquitin ligase UBR4. Upon activation by insulin, it gets phosphorylated through mTORC1-mediated phosphorylation to enhance YTHDF1 stability by removing 'Lys-11'-linked polyubiquitination. May also deubiquitinate other substrates such as the calcium channel CACNA1H. The chain is Ubiquitin carboxyl-terminal hydrolase 5 (UBP5) from Pongo abelii (Sumatran orangutan).